The chain runs to 911 residues: Protein argonaute 4B (911 aa).

Disordered regions lie at residues Met1–Leu51 and Lys149–Arg171. Positions Pro281 to Pro396 constitute a PAZ domain. Positions Phe565 to Lys872 constitute a Piwi domain.

This sequence belongs to the argonaute family. Ago subfamily.

Functionally, probably involved in the RNA silencing pathway. May bind to short RNAs such as microRNAs (miRNAs) or short interfering RNAs (siRNAs), and represses the translation of mRNAs which are complementary to them. The sequence is that of Protein argonaute 4B (AGO4B) from Oryza sativa subsp. japonica (Rice).